Here is an 86-residue protein sequence, read N- to C-terminus: Small ribosomal subunit protein bS20 (86 aa).

Residues 1–27 are compositionally biased toward basic residues; the sequence is MANIKSAKKRAVQSEKRRQHNASRRSM. The disordered stretch occupies residues 1–28; sequence MANIKSAKKRAVQSEKRRQHNASRRSMM.

The protein belongs to the bacterial ribosomal protein bS20 family.

Its function is as follows. Binds directly to 16S ribosomal RNA. This chain is Small ribosomal subunit protein bS20, found in Proteus mirabilis (strain HI4320).